Consider the following 712-residue polypeptide: Transferrin-binding protein B (712 aa).

Residues 1-20 (MNNPLVNQAAMVLPVFLLSA) form the signal peptide. The N-palmitoyl cysteine moiety is linked to residue C21. C21 carries the S-diacylglycerol cysteine lipid modification. An N-terminal handle domain region spans residues 59-196 (GGYGFAMRLK…YHGKEPSRQL (138 aa)). Disordered regions lie at residues 78-104 (EDEV…PKRQ), 123-144 (PYLK…QPKN), 223-256 (IIQP…LTDG), 309-338 (NGKA…SLSG), 364-398 (SAKT…SSEN), 442-495 (ASES…GDTN), and 689-712 (NATN…QPVR). The segment covering 95–104 (DEPKELPKRQ) has biased composition (basic and acidic residues). Residues 128-144 (SNHQNGNTGNGINQPKN) show a composition bias toward polar residues. The tract at residues 197–367 (PASGKITYKG…KVAVVGSAKT (171 aa)) is N-terminal beta barrel domain. Low complexity-rich tracts occupy residues 372-398 (ANGN…SSEN) and 446-459 (GNNQ…GGTA). Residues 389-555 (NGAAGTSSEN…SMFLQGERTD (167 aa)) are C-terminal handle domain. The segment covering 462–475 (RKFDHTPESDKKDA) has biased composition (basic and acidic residues). 2 stretches are compositionally biased toward polar residues: residues 477–495 (AGTQ…GDTN) and 689–700 (NATNASGNSSAT). Positions 556 to 712 (EKEIPSEQNI…FGAKRQQPVR (157 aa)) are C-terminal beta barrel domain.

The protein belongs to the TbpB family. Isotype II subfamily. As to quaternary structure, binds only human holo-transferrin (TF), via the TF C-terminus. Forms a large complex with TF and TbpA. Interacts via its C-terminal domain with Slam1.

It is found in the cell outer membrane. It localises to the cell surface. Its function is as follows. Neisseria acquires iron by extracting it from serum transferrin (TF) in its human host. Acts as a TF receptor and is required for TF utilization. Involved in the initial capture of TF. Helps select only those TF molecules that can be used as an iron source and concentrates them on the cell surface, maintaining the iron-loaded status of the TF C-terminal lobe until its delivery to TbpA. This Neisseria meningitidis serogroup B (strain ATCC BAA-335 / MC58) protein is Transferrin-binding protein B.